A 432-amino-acid chain; its full sequence is MIDSLDLVIDSIFAREVLDSRGNPTVEAEVLLEGGAKGRAIVPSGASTGAYEAHELRDGGTRYMGKGVLRVVEHIEDRIAPSLCGLSASDQVNVDQIMRELDGTENKENLGANAILAVSIATARSAANAFGMPLYRYLGNPMSSLLPVPLMNVINGGAHAANNLDFQEFMLVPHGAESFREALRMGAEVFHTLKKLLSDKGLSTAVGDEGGFAPDLENNNAAGDLLVQAIEKAGFRPGEEISLALDVASTEFFKNGLYHFGEGKFSSEKMVEELKKLVNLYPIISIEDGLSEDDWSGWELLTKELGNKVQLVGDDLFVTNTKRLRQGIDRSIANSILIKVNQIGTLTETLEAIDLSHRMGYTSIISHRSGETEDTTIADLAVATRAGQIKTGSLSRSERVAKYNQLLRIEDQLGAQAVYAGSVGLGPRGLSK.

Gln167 contributes to the (2R)-2-phosphoglycerate binding site. Glu209 serves as the catalytic Proton donor. Mg(2+) is bound by residues Asp246, Glu287, and Asp314. Residues Lys339, Arg368, Ser369, and Lys390 each coordinate (2R)-2-phosphoglycerate. Lys339 (proton acceptor) is an active-site residue.

The protein belongs to the enolase family. Mg(2+) is required as a cofactor.

Its subcellular location is the cytoplasm. The protein resides in the secreted. It is found in the cell surface. The enzyme catalyses (2R)-2-phosphoglycerate = phosphoenolpyruvate + H2O. The protein operates within carbohydrate degradation; glycolysis; pyruvate from D-glyceraldehyde 3-phosphate: step 4/5. In terms of biological role, catalyzes the reversible conversion of 2-phosphoglycerate (2-PG) into phosphoenolpyruvate (PEP). It is essential for the degradation of carbohydrates via glycolysis. The polypeptide is Enolase (Prochlorococcus marinus (strain SARG / CCMP1375 / SS120)).